Consider the following 565-residue polypeptide: Probable serine/threonine-protein kinase abkA (565 aa).

Residues 44-77 (NNNNISLKDKFKDLKDLKDNLNEKKINNDNDDDD) adopt a coiled-coil conformation. The region spanning 231–565 (LFQDDPIAAA…FKNIFYKNYK (335 aa)) is the Protein kinase domain. ATP is bound by residues 237–245 (IAAASIGQV) and Lys259. Catalysis depends on Asp401, which acts as the Proton acceptor.

This sequence belongs to the protein kinase superfamily. ADCK protein kinase family.

This Dictyostelium discoideum (Social amoeba) protein is Probable serine/threonine-protein kinase abkA (abkA).